We begin with the raw amino-acid sequence, 210 residues long: Holliday junction branch migration complex subunit RuvA (210 aa).

A domain I region spans residues 1–70 (MISYLKGNPI…DEQPILYGFA (70 aa)). Positions 71-149 (TAAERELFRQ…QWRKLVGITL (79 aa)) are domain II. The interval 150–160 (PSTSAIPSLEV) is flexible linker. The interval 160–210 (VLEDVEMTLLALGYTNEEINKAISTLSQDNQMLKNTNSEEWIREAIAWLSQ) is domain III.

Belongs to the RuvA family. In terms of assembly, homotetramer. Forms an RuvA(8)-RuvB(12)-Holliday junction (HJ) complex. HJ DNA is sandwiched between 2 RuvA tetramers; dsDNA enters through RuvA and exits via RuvB. An RuvB hexamer assembles on each DNA strand where it exits the tetramer. Each RuvB hexamer is contacted by two RuvA subunits (via domain III) on 2 adjacent RuvB subunits; this complex drives branch migration. In the full resolvosome a probable DNA-RuvA(4)-RuvB(12)-RuvC(2) complex forms which resolves the HJ.

The protein resides in the cytoplasm. Functionally, the RuvA-RuvB-RuvC complex processes Holliday junction (HJ) DNA during genetic recombination and DNA repair, while the RuvA-RuvB complex plays an important role in the rescue of blocked DNA replication forks via replication fork reversal (RFR). RuvA specifically binds to HJ cruciform DNA, conferring on it an open structure. The RuvB hexamer acts as an ATP-dependent pump, pulling dsDNA into and through the RuvAB complex. HJ branch migration allows RuvC to scan DNA until it finds its consensus sequence, where it cleaves and resolves the cruciform DNA. This chain is Holliday junction branch migration complex subunit RuvA, found in Rippkaea orientalis (strain PCC 8801 / RF-1) (Cyanothece sp. (strain PCC 8801)).